Consider the following 177-residue polypeptide: NADH-quinone oxidoreductase subunit B (177 aa).

4 residues coordinate [4Fe-4S] cluster: Cys-56, Cys-57, Cys-121, and Cys-151.

It belongs to the complex I 20 kDa subunit family. As to quaternary structure, NDH-1 is composed of 14 different subunits. Subunits NuoB, C, D, E, F, and G constitute the peripheral sector of the complex. Requires [4Fe-4S] cluster as cofactor.

It localises to the cell inner membrane. The catalysed reaction is a quinone + NADH + 5 H(+)(in) = a quinol + NAD(+) + 4 H(+)(out). Its function is as follows. NDH-1 shuttles electrons from NADH, via FMN and iron-sulfur (Fe-S) centers, to quinones in the respiratory chain. Couples the redox reaction to proton translocation (for every two electrons transferred, four hydrogen ions are translocated across the cytoplasmic membrane), and thus conserves the redox energy in a proton gradient. In Roseobacter denitrificans (strain ATCC 33942 / OCh 114) (Erythrobacter sp. (strain OCh 114)), this protein is NADH-quinone oxidoreductase subunit B.